A 703-amino-acid chain; its full sequence is Neoverrucotoxin subunit alpha (703 aa).

N-acetylserine is present on Ser-2. One can recognise a B30.2/SPRY domain in the interval 508–703 (PRMPFVQGYK…RFDHGTVRLL (196 aa)).

This sequence belongs to the SNTX/VTX toxin family. In terms of assembly, heterodimer of alpha and beta subunits. In terms of processing, not glycosylated. Four intrachain disulfide linkages are present in the heterodimer. No interchain disulfide bound links the two subunits. Expressed by the venom gland.

The protein localises to the secreted. Its function is as follows. Has hemolytic and lethal activities. Its hemolytic activity is inhibited by anionic lipids, especially potently by cardiolipin. This is Neoverrucotoxin subunit alpha from Synanceia verrucosa (Reef stonefish).